The primary structure comprises 904 residues: Copper-transporting ATPase ccc2 (904 aa).

The Cytoplasmic segment spans residues 1–172 (MYTTTLSVQG…GSQIRVWKIR (172 aa)). The 67-residue stretch at 2–68 (YTTTLSVQGM…KIEDCGFDAS (67 aa)) folds into the HMA domain. Positions 13 and 16 each coordinate Cu(+). A helical membrane pass occupies residues 173-193 (FIISISFSLAVMFLPQIFDSC). Topologically, residues 194–197 (DSMR) are lumenal, vesicle. A helical membrane pass occupies residues 198–218 (AAFLVPHYFGICAGHIISLVL). The Cytoplasmic segment spans residues 219–246 (SLPVQFGVGRVYYSAAYHALKRGTANMD). The helical transmembrane segment at 247 to 267 (VLVSLGSTVAFAASIFFMILY) threads the bilayer. Topologically, residues 268-278 (SARHADNPAPI) are lumenal, vesicle. A helical transmembrane segment spans residues 279–296 (FFDTADMLLTFVTLGRYL). Over 297 to 431 (ESKAKGSTSA…PIQQFADRVA (135 aa)) the chain is Cytoplasmic. The chain crosses the membrane as a helical span at residues 432–452 (GIFVPVIVALSISTFTFWFLF). Topologically, residues 453–469 (TKYSSKYPSVFDDPMGK) are lumenal, vesicle. Residues 470–490 (FAVCLKLTISVVVVACPCALG) form a helical membrane-spanning segment. Residues 491 to 805 (LSTPTAVMVG…RIKMNLVWAC (315 aa)) are Cytoplasmic-facing. Aspartate 529 acts as the 4-aspartylphosphate intermediate in catalysis. Aspartate 742 and aspartate 746 together coordinate Mg(2+). The helical transmembrane segment at 806–826 (IYNFVMIPIAMGFFLPWGIYL) threads the bilayer. Over 827-828 (NP) the chain is Lumenal, vesicle. A helical transmembrane segment spans residues 829–849 (MWASAAMMFSSLSVLASSLLL). The Cytoplasmic segment spans residues 850-904 (RRWKKPKSLIFSEADDVETESSTNSSVLQKVYTATRSIFGRNKSSNKYQPVANEV).

Belongs to the cation transport ATPase (P-type) (TC 3.A.3) family. Type IB subfamily.

Its subcellular location is the golgi apparatus. The protein localises to the trans-Golgi network membrane. The enzyme catalyses Cu(+)(in) + ATP + H2O = Cu(+)(out) + ADP + phosphate + H(+). Functionally, probably involved in copper transport and in the regulation of cellular copper level. Retrieves copper from the metallochaperone atx1 and incorporates it into trans-Golgi vesicles. In Schizosaccharomyces pombe (strain 972 / ATCC 24843) (Fission yeast), this protein is Copper-transporting ATPase ccc2 (ccc2).